A 138-amino-acid polypeptide reads, in one-letter code: Large ribosomal subunit protein bL17 (138 aa).

Belongs to the bacterial ribosomal protein bL17 family. Part of the 50S ribosomal subunit. Contacts protein L32.

This chain is Large ribosomal subunit protein bL17, found in Bradyrhizobium diazoefficiens (strain JCM 10833 / BCRC 13528 / IAM 13628 / NBRC 14792 / USDA 110).